A 172-amino-acid polypeptide reads, in one-letter code: Large ribosomal subunit protein uL10 (172 aa).

Belongs to the universal ribosomal protein uL10 family. As to quaternary structure, part of the ribosomal stalk of the 50S ribosomal subunit. The N-terminus interacts with L11 and the large rRNA to form the base of the stalk. The C-terminus forms an elongated spine to which L12 dimers bind in a sequential fashion forming a multimeric L10(L12)X complex.

In terms of biological role, forms part of the ribosomal stalk, playing a central role in the interaction of the ribosome with GTP-bound translation factors. This Liberibacter africanus (Citrus greening disease) protein is Large ribosomal subunit protein uL10 (rplJ).